We begin with the raw amino-acid sequence, 318 residues long: Acetyl-coenzyme A carboxylase carboxyl transferase subunit alpha (318 aa).

The 262-residue stretch at 34–295 (DIEDQISQLR…KQAIKKDLSE (262 aa)) folds into the CoA carboxyltransferase C-terminal domain.

This sequence belongs to the AccA family. In terms of assembly, acetyl-CoA carboxylase is a heterohexamer composed of biotin carboxyl carrier protein (AccB), biotin carboxylase (AccC) and two subunits each of ACCase subunit alpha (AccA) and ACCase subunit beta (AccD).

The protein localises to the cytoplasm. It carries out the reaction N(6)-carboxybiotinyl-L-lysyl-[protein] + acetyl-CoA = N(6)-biotinyl-L-lysyl-[protein] + malonyl-CoA. It participates in lipid metabolism; malonyl-CoA biosynthesis; malonyl-CoA from acetyl-CoA: step 1/1. Component of the acetyl coenzyme A carboxylase (ACC) complex. First, biotin carboxylase catalyzes the carboxylation of biotin on its carrier protein (BCCP) and then the CO(2) group is transferred by the carboxyltransferase to acetyl-CoA to form malonyl-CoA. The chain is Acetyl-coenzyme A carboxylase carboxyl transferase subunit alpha from Colwellia psychrerythraea (strain 34H / ATCC BAA-681) (Vibrio psychroerythus).